The sequence spans 344 residues: Heat-inducible transcription repressor HrcA (344 aa).

This sequence belongs to the HrcA family.

Its function is as follows. Negative regulator of class I heat shock genes (grpE-dnaK-dnaJ and groELS operons). Prevents heat-shock induction of these operons. This is Heat-inducible transcription repressor HrcA from Streptococcus equi subsp. zooepidemicus (strain H70).